We begin with the raw amino-acid sequence, 829 residues long: Leucine--tRNA ligase (829 aa).

A 'HIGH' region motif is present at residues 40–50; sequence PYPSGNIHMGH. Residues 581–585 carry the 'KMSKS' region motif; the sequence is KMSKS. Residue Lys-584 coordinates ATP.

Belongs to the class-I aminoacyl-tRNA synthetase family.

It localises to the cytoplasm. The catalysed reaction is tRNA(Leu) + L-leucine + ATP = L-leucyl-tRNA(Leu) + AMP + diphosphate. This is Leucine--tRNA ligase from Nitratidesulfovibrio vulgaris (strain ATCC 29579 / DSM 644 / CCUG 34227 / NCIMB 8303 / VKM B-1760 / Hildenborough) (Desulfovibrio vulgaris).